We begin with the raw amino-acid sequence, 163 residues long: General stress protein 16O (163 aa).

The span at 19 to 30 shows a compositional bias: basic and acidic residues; that stretch reads QKELSGEKKETE. Disordered stretches follow at residues 19–55 and 115–163; these read QKEL…TLVT and ADVE…QDSK. Residues 89 to 123 form a dksA C4-type; degenerate zinc finger; the sequence is CEKTGQEIPYERLEAVPYARMTVEAQADVEDDLET. Over residues 127–146 the composition is skewed to basic and acidic residues; it reads SYEREFHEQVKDLSNKETID.

The sequence is that of General stress protein 16O (yocK) from Bacillus subtilis (strain 168).